The following is a 388-amino-acid chain: Processive diacylglycerol beta-glucosyltransferase (388 aa).

It belongs to the glycosyltransferase 28 family. UgtP subfamily.

Its subcellular location is the cell membrane. It carries out the reaction a 1,2-diacyl-3-O-(beta-D-glucopyranosyl)-sn-glycerol + UDP-alpha-D-glucose = a 1,2-diacyl-3-O-(beta-D-Glc-(1-&gt;6)-beta-D-Glc)-sn-glycerol + UDP + H(+). The enzyme catalyses a 1,2-diacyl-3-O-(beta-D-Glc-(1-&gt;6)-beta-D-Glc)-sn-glycerol + UDP-alpha-D-glucose = a 1,2-diacyl-3-O-(beta-D-Glc-(1-&gt;6)-beta-D-Glc-(1-&gt;6)-beta-D-Glc)-sn-glycerol + UDP + H(+). The catalysed reaction is a 1,2-diacyl-sn-glycerol + UDP-alpha-D-glucose = a 1,2-diacyl-3-O-(beta-D-glucopyranosyl)-sn-glycerol + UDP + H(+). Its pathway is glycolipid metabolism; diglucosyl-diacylglycerol biosynthesis. Its function is as follows. Processive glucosyltransferase involved in the biosynthesis of both the bilayer- and non-bilayer-forming membrane glucolipids. Is able to successively transfer up to three glucosyl residues to diacylglycerol (DAG), thereby catalyzing the formation of beta-monoglucosyl-DAG (3-O-(beta-D-glucopyranosyl)-1,2-diacyl-sn-glycerol), beta-diglucosyl-DAG (3-O-(beta-D-glucopyranosyl-beta-(1-&gt;6)-D-glucopyranosyl)-1,2-diacyl-sn-glycerol) and beta-triglucosyl-DAG (3-O-(beta-D-glucopyranosyl-beta-(1-&gt;6)-D-glucopyranosyl-beta-(1-&gt;6)-D-glucopyranosyl)-1,2-diacyl-sn-glycerol). Beta-diglucosyl-DAG is the predominant glycolipid found in Bacillales and is also used as a membrane anchor for lipoteichoic acid (LTA). The polypeptide is Processive diacylglycerol beta-glucosyltransferase (Bacillus anthracis (strain A0248)).